We begin with the raw amino-acid sequence, 328 residues long: m7GpppN-mRNA hydrolase NUDT17 (328 aa).

The Nudix hydrolase domain maps to 90–236 (GVDLGVAVIL…DGTETPGLLP (147 aa)). The Nudix box signature appears at 127-148 (GHVELEEELLDGGLRELWEESG). The Mg(2+) site is built by glutamate 142 and glutamate 146. The segment at 299-328 (PCKSAAYLDPGPAKEEWNMDPLPPNQGSGK) is disordered.

The protein belongs to the Nudix hydrolase family. Requires Mg(2+) as cofactor. The cofactor is Mn(2+).

The catalysed reaction is a 5'-end (N(7)-methyl 5'-triphosphoguanosine)-ribonucleoside in mRNA + H2O = N(7)-methyl-GDP + a 5'-end phospho-ribonucleoside in mRNA + 2 H(+). Functionally, acts as a decapping enzyme capable of hydrolyzing monomethylated capped RNAs (in vitro). Hydrolyzes monomethylated capped RNA after alpha and beta phosphates to form N(7)-methyl-GDP. Shows low activity towards unmethylated capped RNA. This is m7GpppN-mRNA hydrolase NUDT17 (NUDT17) from Homo sapiens (Human).